A 146-amino-acid polypeptide reads, in one-letter code: Probable gamma-secretase subunit PEN-2 (146 aa).

A disordered region spans residues 1–26 (MEATRSDDPSLNPIRNRNPNPNPNPN). The Lumenal segment spans residues 1-61 (MEATRSDDPS…SVDYARRFYK (61 aa)). The segment covering 9-19 (PSLNPIRNRNP) has biased composition (low complexity). A helical transmembrane segment spans residues 62–82 (FGFALLPWLWFVNCFYFWPVL). The Cytoplasmic portion of the chain corresponds to 83–98 (RHSRAFPQIRNYVVRS). The chain crosses the membrane as a helical span at residues 99–119 (AIGFSVFTALLSAWALTFSIG). The Lumenal portion of the chain corresponds to 120–146 (GEQLFGPLYDKLVMYNVADRLGLSGLA).

Belongs to the PEN-2 family. As to quaternary structure, probable component of the gamma-secretase complex, a complex composed of a presenilin homodimer, nicastrin, APH1 and PEN2.

The protein localises to the membrane. Its function is as follows. Probable subunit of the gamma-secretase complex, an endoprotease complex that catalyzes the intramembrane cleavage of integral membrane proteins such as Notch receptors. The polypeptide is Probable gamma-secretase subunit PEN-2 (Arabidopsis thaliana (Mouse-ear cress)).